We begin with the raw amino-acid sequence, 223 residues long: Phosphoribosylformylglycinamidine synthase subunit PurQ (223 aa).

Residues 4-223 form the Glutamine amidotransferase type-1 domain; the sequence is FAVIVFPGTN…FKSIVEWMKK (220 aa). Residue Cys-85 is the Nucleophile of the active site. Active-site residues include His-196 and Glu-198.

In terms of assembly, part of the FGAM synthase complex composed of 1 PurL, 1 PurQ and 2 PurS subunits.

It localises to the cytoplasm. It catalyses the reaction N(2)-formyl-N(1)-(5-phospho-beta-D-ribosyl)glycinamide + L-glutamine + ATP + H2O = 2-formamido-N(1)-(5-O-phospho-beta-D-ribosyl)acetamidine + L-glutamate + ADP + phosphate + H(+). It carries out the reaction L-glutamine + H2O = L-glutamate + NH4(+). It participates in purine metabolism; IMP biosynthesis via de novo pathway; 5-amino-1-(5-phospho-D-ribosyl)imidazole from N(2)-formyl-N(1)-(5-phospho-D-ribosyl)glycinamide: step 1/2. Its function is as follows. Part of the phosphoribosylformylglycinamidine synthase complex involved in the purines biosynthetic pathway. Catalyzes the ATP-dependent conversion of formylglycinamide ribonucleotide (FGAR) and glutamine to yield formylglycinamidine ribonucleotide (FGAM) and glutamate. The FGAM synthase complex is composed of three subunits. PurQ produces an ammonia molecule by converting glutamine to glutamate. PurL transfers the ammonia molecule to FGAR to form FGAM in an ATP-dependent manner. PurS interacts with PurQ and PurL and is thought to assist in the transfer of the ammonia molecule from PurQ to PurL. This is Phosphoribosylformylglycinamidine synthase subunit PurQ from Pyrococcus horikoshii (strain ATCC 700860 / DSM 12428 / JCM 9974 / NBRC 100139 / OT-3).